Reading from the N-terminus, the 712-residue chain is Polyribonucleotide nucleotidyltransferase (712 aa).

Residues Asp-487 and Asp-493 each contribute to the Mg(2+) site. Residues 554-613 (PKIITMTINPDKIRDVIGPSGKQINKIIEETGVKIDIEQDGTVFISSINQEMNDKAKKII) enclose the KH domain. One can recognise an S1 motif domain in the interval 623–691 (GEIYEGKVKR…KQGRVNLSRK (69 aa)).

This sequence belongs to the polyribonucleotide nucleotidyltransferase family. The cofactor is Mg(2+).

It localises to the cytoplasm. It carries out the reaction RNA(n+1) + phosphate = RNA(n) + a ribonucleoside 5'-diphosphate. Functionally, involved in mRNA degradation. Catalyzes the phosphorolysis of single-stranded polyribonucleotides processively in the 3'- to 5'-direction. The chain is Polyribonucleotide nucleotidyltransferase from Bacillus anthracis (strain CDC 684 / NRRL 3495).